The following is a 343-amino-acid chain: Heat-inducible transcription repressor HrcA (343 aa).

It belongs to the HrcA family.

Negative regulator of class I heat shock genes (grpE-dnaK-dnaJ and groELS operons). Prevents heat-shock induction of these operons. This Bacillus subtilis (strain 168) protein is Heat-inducible transcription repressor HrcA.